The chain runs to 445 residues: Na(+)-translocating NADH-quinone reductase subunit A (445 aa).

Belongs to the NqrA family. Composed of six subunits; NqrA, NqrB, NqrC, NqrD, NqrE and NqrF.

It catalyses the reaction a ubiquinone + n Na(+)(in) + NADH + H(+) = a ubiquinol + n Na(+)(out) + NAD(+). Functionally, NQR complex catalyzes the reduction of ubiquinone-1 to ubiquinol by two successive reactions, coupled with the transport of Na(+) ions from the cytoplasm to the periplasm. NqrA to NqrE are probably involved in the second step, the conversion of ubisemiquinone to ubiquinol. In Teredinibacter turnerae (strain ATCC 39867 / T7901), this protein is Na(+)-translocating NADH-quinone reductase subunit A.